A 343-amino-acid polypeptide reads, in one-letter code: Photosystem II protein D1 (343 aa).

Helical transmembrane passes span 28–45 (YIGWFGVLLFPLIAVSTV), 117–132 (HFLAAVLAWLGREYEY), and 141–155 (WIYLAFSAPVVAASA). His-117 contacts chlorophyll a. A pheophytin a-binding site is contributed by Trp-125. 2 residues coordinate [CaMn4O5] cluster: Asp-169 and Glu-188. Residues 196–217 (FHILGVSAVFGGSLFSAMHGSL) form a helical membrane-spanning segment. His-197 contributes to the chlorophyll a binding site. A quinone contacts are provided by residues His-214 and 263–264 (SF). Position 214 (His-214) interacts with Fe cation. A Fe cation-binding site is contributed by His-271. Residues 273 to 287 (FLAAWPVIGIWCTAI) traverse the membrane as a helical segment. 4 residues coordinate [CaMn4O5] cluster: His-331, Glu-332, Asp-341, and Ala-343.

It belongs to the reaction center PufL/M/PsbA/D family. As to quaternary structure, PSII is composed of 1 copy each of membrane proteins PsbA, PsbB, PsbC, PsbD, PsbE, PsbF, PsbH, PsbI, PsbJ, PsbK, PsbL, PsbM, PsbT, PsbX, PsbY, PsbZ, Psb30/Ycf12, at least 3 peripheral proteins of the oxygen-evolving complex and a large number of cofactors. It forms dimeric complexes. The D1/D2 heterodimer binds P680, chlorophylls that are the primary electron donor of PSII, and subsequent electron acceptors. It shares a non-heme iron and each subunit binds pheophytin, quinone, additional chlorophylls, carotenoids and lipids. D1 provides most of the ligands for the Mn4-Ca-O5 cluster of the oxygen-evolving complex (OEC). There is also a Cl(-1) ion associated with D1 and D2, which is required for oxygen evolution. The PSII complex binds additional chlorophylls, carotenoids and specific lipids. is required as a cofactor. Tyr-160 forms a radical intermediate that is referred to as redox-active TyrZ, YZ or Y-Z.

The protein resides in the plastid. It localises to the chloroplast thylakoid membrane. It carries out the reaction 2 a plastoquinone + 4 hnu + 2 H2O = 2 a plastoquinol + O2. Photosystem II (PSII) is a light-driven water:plastoquinone oxidoreductase that uses light energy to abstract electrons from H(2)O, generating O(2) and a proton gradient subsequently used for ATP formation. It consists of a core antenna complex that captures photons, and an electron transfer chain that converts photonic excitation into a charge separation. The D1/D2 (PsbA/PsbD) reaction center heterodimer binds P680, the primary electron donor of PSII as well as several subsequent electron acceptors. In Prorocentrum micans (Red tide dinoflagellate), this protein is Photosystem II protein D1.